We begin with the raw amino-acid sequence, 440 residues long: Stromal membrane-associated protein 1 (440 aa).

Residues 18-143 (QLILSKLLRE…IAITNKEKEK (126 aa)) enclose the Arf-GAP domain. Residues 33-56 (CADCEAKGPRWASWNIGVFICIRC) form a C4-type zinc finger. Basic and acidic residues-rich tracts occupy residues 140-158 (EKEK…EKPA) and 165-178 (KLPK…EPKK). 2 disordered regions span residues 140–211 (EKEK…PATA) and 410–440 (NASA…QLWK). The short motif at 192–196 (LLGLD) is the Interaction with clathrin heavy chains element. Residues 420–440 (STTAGWSGSSSGQTLSTQLWK) show a composition bias toward low complexity.

As to quaternary structure, interacts with ARF6. Interacts with clathrin heavy chains via the clathrin box-like motif. In terms of tissue distribution, detected in adult brain, lung, heart, liver, ovary and bone marrow. Detected in stromal cells of the red pulp of adult spleen.

Its subcellular location is the cell membrane. Its function is as follows. GTPase activating protein that acts on ARF6. Plays a role in clathrin-dependent endocytosis. May play a role in erythropoiesis. The chain is Stromal membrane-associated protein 1 (Smap1) from Mus musculus (Mouse).